A 200-amino-acid chain; its full sequence is Probable GTP-binding protein EngB (200 aa).

Positions Ser25–Trp199 constitute an EngB-type G domain. Residues Gly33–Ser40, Gly60–Leu64, Asp78–Gly81, Thr145–Asp148, and Phe178–Ser180 each bind GTP. Mg(2+) is bound by residues Ser40 and Thr62.

This sequence belongs to the TRAFAC class TrmE-Era-EngA-EngB-Septin-like GTPase superfamily. EngB GTPase family. Requires Mg(2+) as cofactor.

In terms of biological role, necessary for normal cell division and for the maintenance of normal septation. The sequence is that of Probable GTP-binding protein EngB from Legionella pneumophila (strain Paris).